Reading from the N-terminus, the 263-residue chain is Mediator of RNA polymerase II transcription subunit 4 (263 aa).

Residues 61–111 (LQLAAEQAGIEKNMDALREQVRKQDEEINQLQRQLKEAEQILATSIFQARQ) adopt a coiled-coil conformation. Disordered stretches follow at residues 209–228 (APNQ…MGAG) and 235–263 (DTRA…SDSQ). Over residues 251–263 (STESSSSSSSDSQ) the composition is skewed to low complexity.

It belongs to the Mediator complex subunit 4 family. In terms of assembly, component of the Mediator complex.

The protein resides in the nucleus. Component of the Mediator complex, a coactivator involved in the regulated transcription of nearly all RNA polymerase II-dependent genes. Mediator functions as a bridge to convey information from gene-specific regulatory proteins to the basal RNA polymerase II transcription machinery. Mediator is recruited to promoters by direct interactions with regulatory proteins and serves as a scaffold for the assembly of a functional preinitiation complex with RNA polymerase II and the general transcription factors. This Anopheles gambiae (African malaria mosquito) protein is Mediator of RNA polymerase II transcription subunit 4 (MED4).